We begin with the raw amino-acid sequence, 420 residues long: Lactosylceramide alpha-2,3-sialyltransferase (420 aa).

The disordered stretch occupies residues 1–39 (MRKKAAGGAERRPLKPRTEAAAAAPAGRAMPSDHSRMKL). Over 1-67 (MRKKAAGGAE…MRRPNLLLKD (67 aa)) the chain is Cytoplasmic. Residues 9–18 (AERRPLKPRT) show a composition bias toward basic and acidic residues. The segment covering 20–29 (AAAAAPAGRA) has biased composition (low complexity). A helical transmembrane segment spans residues 68 to 88 (ILKCTLLLFGVWILFYILKLN). Residues 89-420 (HTTEECDMKR…DLSGGIHSEF (332 aa)) are Lumenal-facing. C197 and C355 are oxidised to a cystine. An N-linked (GlcNAc...) asparagine glycan is attached at N238.

It belongs to the glycosyltransferase 29 family.

It localises to the golgi apparatus membrane. It catalyses the reaction a beta-D-Gal-(1-&gt;4)-beta-D-Glc-(1&lt;-&gt;1)-Cer(d18:1(4E)) + CMP-N-acetyl-beta-neuraminate = a ganglioside GM3 (d18:1(4E)) + CMP + H(+). It carries out the reaction ganglioside GA2 (d18:1(4E)/18:0) + CMP-N-acetyl-beta-neuraminate = ganglioside GM2 (d18:1(4E)/18:0) + CMP + H(+). The enzyme catalyses a beta-D-Gal-(1&lt;-&gt;1')-ceramide + CMP-N-acetyl-beta-neuraminate = N-acetyl-alpha-neuraminosyl-(2-&gt;3)-beta-D-galactosyl-(1&lt;-&gt;1')-ceramide + CMP + H(+). The catalysed reaction is ganglioside GA1 (d18:1(4E)/18:0) + CMP-N-acetyl-beta-neuraminate = ganglioside GM1 (d18:1(4E)/18:0) + CMP + H(+). Its function is as follows. Transfers the sialyl group (N-acetyl-alpha-neuraminyl or NeuAc) from CMP-NeuAc to the non-reducing terminal galactose (Gal) of glycosphingolipids forming gangliosides (important molecules involved in the regulation of multiple cellular processes, including cell proliferation and differentiation, apoptosis, embryogenesis, development, and oncogenesis). Mainly involved in the biosynthesis of ganglioside GM3 but can also use different glycolipids as substrate acceptors such as D-galactosylceramide (GalCer), asialo-GM2 (GA2) and asialo-GM1 (GA1), although less preferentially than beta-D-Gal-(1-&gt;4)-beta-D-Glc-(1&lt;-&gt;1)-Cer (LacCer). This chain is Lactosylceramide alpha-2,3-sialyltransferase (ST3GAL5), found in Bos taurus (Bovine).